The sequence spans 397 residues: Ribosomal RNA large subunit methyltransferase I (397 aa).

The PUA domain occupies 2–81 (STTVYLQKDR…EQIDTEFFVR (80 aa)).

It belongs to the methyltransferase superfamily. RlmI family.

Its subcellular location is the cytoplasm. It carries out the reaction cytidine(1962) in 23S rRNA + S-adenosyl-L-methionine = 5-methylcytidine(1962) in 23S rRNA + S-adenosyl-L-homocysteine + H(+). In terms of biological role, specifically methylates the cytosine at position 1962 (m5C1962) of 23S rRNA. The chain is Ribosomal RNA large subunit methyltransferase I from Tolumonas auensis (strain DSM 9187 / NBRC 110442 / TA 4).